The primary structure comprises 821 residues: TORTIFOLIA1-like protein 1 (821 aa).

HEAT repeat units follow at residues 69 to 110 (PDSP…SYTD), 114 to 151 (SQLAKIISHIVKRLKDADNGVRDACRDAIGSLSAQFLK), 163 to 201 (SSLVGLFAKPLFEAMAEQNKSLQSGAAICMGKMIDSATE), 205 to 242 (AAFQKLCPRISKLLNSPNYITKASLLPVVGSLSQVGAI), and 245 to 282 (QSLESLLHSIHECLGCTNWVTRKAAADVLISLAVHSSS). The residue at position 406 (S406) is a Phosphoserine. Disordered regions lie at residues 416 to 437 (PSRQKNSSNSNTEDESDANTSV) and 553 to 610 (MSIQ…RAWD). Residues 501 to 554 (PPLQRQLLHLERQQTHIMNMLQDFMGGSHDGMISLENRVRGLERIVEEMSREMS) adopt a coiled-coil conformation. A compositionally biased stretch (polar residues) spans 579-590 (YGPSSRNTQTST).

Expressed at low levels in roots, hypocotyls, stems, flowers, siliques, cotyledons, and leaves. Particularly present in hydathodes of cotyledons and root hairs.

Its subcellular location is the cytoplasm. The protein localises to the cytoskeleton. Plant-specific microtubule-associated protein (MAP) that regulates the orientation of cortical microtubules and the direction of organ growth. This chain is TORTIFOLIA1-like protein 1, found in Arabidopsis thaliana (Mouse-ear cress).